The primary structure comprises 161 residues: NADH:FMN oxidoreductase (161 aa).

Residues Asp30, Ala37–Thr40, Cys54–Thr61, Ala88, Arg94, and Phe151 contribute to the FMN site.

The protein belongs to the non-flavoprotein flavin reductase family.

The protein resides in the cytoplasm. It carries out the reaction FMNH2 + NAD(+) = FMN + NADH + 2 H(+). The catalysed reaction is FADH2 + NAD(+) = FAD + NADH + 2 H(+). The protein operates within sulfur metabolism; dibenzothiophene degradation. An NADH:FMN oxidoreductase which supplies reduced FMN for the '4S' desulfurization pathway that removes covalently bound sulfur from dibenzothiophene (DBT) without breaking carbon-carbon bonds. Can also use FAD. Provides DszC and probably also DszA (DBT-monooxygenase and DBTO2-monooxygenase respectively) with reduced flavin (FMN and/or FAD). In Mycolicibacterium goodii (Mycobacterium goodii), this protein is NADH:FMN oxidoreductase.